The following is a 422-amino-acid chain: F-box/FBD/LRR-repeat protein At5g56420 (422 aa).

The F-box domain occupies 5–54; the sequence is RDRLSQLPDDFLLQILSWLPTKDVLVTSLLSKRWRFLWTLVPRLNYDLRL. 7 LRR repeats span residues 59–85, 136–163, 164–189, 193–212, 214–238, 279–304, and 305–330; these read CPRF…NIKI, VLKL…HLLD, VKYL…VVQR, DNVK…SLHK, SQAF…DIED, LCLI…ELCT, and CAPR…KLRQ. The 50-residue stretch at 342-391 folds into the FBD domain; that stretch reads SWKQPALPKCLLFHLETFKWELYEGSQKQKEVATFILKHAIRLKTAIISP.

This is F-box/FBD/LRR-repeat protein At5g56420 from Arabidopsis thaliana (Mouse-ear cress).